The primary structure comprises 573 residues: Dihydroxy-acid dehydratase (573 aa).

Residues 1–14 (MTEKSPKPHKRSDA) show a composition bias toward basic and acidic residues. Positions 1-21 (MTEKSPKPHKRSDAITEGPNR) are disordered. Cys-55 contacts [2Fe-2S] cluster. Asp-87 serves as a coordination point for Mg(2+). Cys-128 is a binding site for [2Fe-2S] cluster. Residues Asp-129 and Lys-130 each coordinate Mg(2+). Lys-130 is modified (N6-carboxylysine). [2Fe-2S] cluster is bound at residue Cys-200. Glu-450 lines the Mg(2+) pocket. The active-site Proton acceptor is the Ser-476.

The protein belongs to the IlvD/Edd family. As to quaternary structure, homodimer. Requires [2Fe-2S] cluster as cofactor. It depends on Mg(2+) as a cofactor.

It catalyses the reaction (2R)-2,3-dihydroxy-3-methylbutanoate = 3-methyl-2-oxobutanoate + H2O. It carries out the reaction (2R,3R)-2,3-dihydroxy-3-methylpentanoate = (S)-3-methyl-2-oxopentanoate + H2O. The protein operates within amino-acid biosynthesis; L-isoleucine biosynthesis; L-isoleucine from 2-oxobutanoate: step 3/4. It participates in amino-acid biosynthesis; L-valine biosynthesis; L-valine from pyruvate: step 3/4. In terms of biological role, functions in the biosynthesis of branched-chain amino acids. Catalyzes the dehydration of (2R,3R)-2,3-dihydroxy-3-methylpentanoate (2,3-dihydroxy-3-methylvalerate) into 2-oxo-3-methylpentanoate (2-oxo-3-methylvalerate) and of (2R)-2,3-dihydroxy-3-methylbutanoate (2,3-dihydroxyisovalerate) into 2-oxo-3-methylbutanoate (2-oxoisovalerate), the penultimate precursor to L-isoleucine and L-valine, respectively. In Koribacter versatilis (strain Ellin345), this protein is Dihydroxy-acid dehydratase.